A 249-amino-acid chain; its full sequence is tRNA uridine(34) hydroxylase (249 aa).

The region spanning 124–218 is the Rhodanese domain; it reads TKQDVIVIDT…YLEDTQNKNN (95 aa). C178 functions as the Cysteine persulfide intermediate in the catalytic mechanism.

The protein belongs to the TrhO family.

It carries out the reaction uridine(34) in tRNA + AH2 + O2 = 5-hydroxyuridine(34) in tRNA + A + H2O. In terms of biological role, catalyzes oxygen-dependent 5-hydroxyuridine (ho5U) modification at position 34 in tRNAs. In Rickettsia canadensis (strain McKiel), this protein is tRNA uridine(34) hydroxylase.